A 137-amino-acid polypeptide reads, in one-letter code: Large ribosomal subunit protein uL16 (137 aa).

It belongs to the universal ribosomal protein uL16 family. Part of the 50S ribosomal subunit.

In terms of biological role, binds 23S rRNA and is also seen to make contacts with the A and possibly P site tRNAs. The polypeptide is Large ribosomal subunit protein uL16 (Sorangium cellulosum (strain So ce56) (Polyangium cellulosum (strain So ce56))).